Reading from the N-terminus, the 344-residue chain is tRNA N6-adenosine threonylcarbamoyltransferase (344 aa).

2 residues coordinate Fe cation: His111 and His115. Residues 133-137, Asp166, Gly179, Asp183, and Asn270 each bind substrate; that span reads VVSGG. Asp298 is a binding site for Fe cation.

Belongs to the KAE1 / TsaD family. Requires Fe(2+) as cofactor.

It is found in the cytoplasm. It carries out the reaction L-threonylcarbamoyladenylate + adenosine(37) in tRNA = N(6)-L-threonylcarbamoyladenosine(37) in tRNA + AMP + H(+). Its function is as follows. Required for the formation of a threonylcarbamoyl group on adenosine at position 37 (t(6)A37) in tRNAs that read codons beginning with adenine. Is involved in the transfer of the threonylcarbamoyl moiety of threonylcarbamoyl-AMP (TC-AMP) to the N6 group of A37, together with TsaE and TsaB. TsaD likely plays a direct catalytic role in this reaction. This is tRNA N6-adenosine threonylcarbamoyltransferase from Persephonella marina (strain DSM 14350 / EX-H1).